Reading from the N-terminus, the 60-residue chain is ADQLARLRAEFQANRYLTEERRQNLARELSLNEAQIKIWFQNKRAKIKKASGVKNTLALY.

A DNA-binding region (homeobox) is located at residues 1-41; it reads ADQLARLRAEFQANRYLTEERRQNLARELSLNEAQIKIWFQ.

The protein belongs to the engrailed homeobox family.

Its subcellular location is the nucleus. The polypeptide is Homeobox protein engrailed-like A (Myxine glutinosa (Atlantic hagfish)).